Consider the following 382-residue polypeptide: Osmoprotectant import ATP-binding protein OsmV (382 aa).

Residues 2-241 (IKLENLTKQF…PANEFVGSFV (240 aa)) enclose the ABC transporter domain. 39 to 46 (GPSGCGKT) is an ATP binding site. CBS domains follow at residues 258–320 (VTDQ…THPF) and 322–373 (ITGK…GRTR).

The protein belongs to the ABC transporter superfamily. In terms of assembly, the complex is composed of two ATP-binding proteins (OsmV), two transmembrane proteins (OsmW and OsmY) and a solute-binding protein (OsmX).

It is found in the cell inner membrane. Its function is as follows. Part of the OsmU ABC transporter complex, which is involved in the uptake of osmoprotectants such as choline-O-sulfate and glycine betaine. Probably responsible for energy coupling to the transport system. This chain is Osmoprotectant import ATP-binding protein OsmV (osmV), found in Salmonella typhimurium (strain LT2 / SGSC1412 / ATCC 700720).